Reading from the N-terminus, the 255-residue chain is Zinc-finger homeodomain protein 6 (255 aa).

The interval 1–35 is disordered; it reads MEFRGHDEPVDEMGVAYGRTPPSSSSSPAASASAG. Over residues 21–35 the composition is skewed to low complexity; that stretch reads PPSSSSSPAASASAG. The ZF-HD dimerization-type; degenerate zinc-finger motif lies at 45-93; it reads YHECLRNHAAAMGGHVVDGCREFMPMPGDAADALKCAACGCHRSFHRKD. The segment covering 106 to 126 has biased composition (pro residues); that stretch reads PSPPTPRVPLLMPPPQPQPHP. Disordered regions lie at residues 106–181 and 226–255; these read PSPP…KFTP and NNKSSIGSSSGGGSRRQPQEQQSQQQQQQQ. Positions 139 to 153 are enriched in low complexity; that stretch reads YHHTPSGSGGTTTES. A DNA-binding region (homeobox) is located at residues 172 to 235; the sequence is RKRFRTKFTP…NNKSSIGSSS (64 aa). Residues 240-255 show a composition bias toward low complexity; the sequence is RRQPQEQQSQQQQQQQ.

In terms of assembly, homo- and heterodimer with other ZFHD proteins.

It is found in the nucleus. Its function is as follows. Putative transcription factor. The protein is Zinc-finger homeodomain protein 6 (ZHD6) of Oryza sativa subsp. japonica (Rice).